We begin with the raw amino-acid sequence, 290 residues long: 33 kDa chaperonin (290 aa).

Cystine bridges form between Cys231/Cys233 and Cys263/Cys266.

Belongs to the HSP33 family. Post-translationally, under oxidizing conditions two disulfide bonds are formed involving the reactive cysteines. Under reducing conditions zinc is bound to the reactive cysteines and the protein is inactive.

It localises to the cytoplasm. Redox regulated molecular chaperone. Protects both thermally unfolding and oxidatively damaged proteins from irreversible aggregation. Plays an important role in the bacterial defense system toward oxidative stress. The polypeptide is 33 kDa chaperonin (Thermotoga maritima (strain ATCC 43589 / DSM 3109 / JCM 10099 / NBRC 100826 / MSB8)).